Here is a 461-residue protein sequence, read N- to C-terminus: Alpha-L-fucosidase (461 aa).

The N-terminal stretch at 1–18 (MKMIIIFFILLILNLIKS) is a signal peptide.

The protein belongs to the glycosyl hydrolase 29 family.

It catalyses the reaction an alpha-L-fucoside + H2O = L-fucose + an alcohol. Its function is as follows. Alpha-L-fucosidase is responsible for hydrolyzing the alpha-1,6-linked fucose joined to the reducing-end N-acetylglucosamine of the carbohydrate moieties of glycoproteins. The protein is Alpha-L-fucosidase (alfA) of Dictyostelium discoideum (Social amoeba).